Reading from the N-terminus, the 410-residue chain is Multifunctional CCA protein (410 aa).

The ATP site is built by glycine 8 and arginine 11. Residues glycine 8 and arginine 11 each contribute to the CTP site. The Mg(2+) site is built by glutamate 21 and aspartate 23. Residues arginine 91, arginine 137, and arginine 140 each contribute to the ATP site. Positions 91, 137, and 140 each coordinate CTP. Positions 228–329 constitute an HD domain; that stretch reads TGIHVMMALR…LKLFDRLDVW (102 aa).

This sequence belongs to the tRNA nucleotidyltransferase/poly(A) polymerase family. Bacterial CCA-adding enzyme type 1 subfamily. In terms of assembly, monomer. Can also form homodimers and oligomers. Mg(2+) serves as cofactor. The cofactor is Ni(2+).

It carries out the reaction a tRNA precursor + 2 CTP + ATP = a tRNA with a 3' CCA end + 3 diphosphate. The enzyme catalyses a tRNA with a 3' CCA end + 2 CTP + ATP = a tRNA with a 3' CCACCA end + 3 diphosphate. In terms of biological role, catalyzes the addition and repair of the essential 3'-terminal CCA sequence in tRNAs without using a nucleic acid template. Adds these three nucleotides in the order of C, C, and A to the tRNA nucleotide-73, using CTP and ATP as substrates and producing inorganic pyrophosphate. tRNA 3'-terminal CCA addition is required both for tRNA processing and repair. Also involved in tRNA surveillance by mediating tandem CCA addition to generate a CCACCA at the 3' terminus of unstable tRNAs. While stable tRNAs receive only 3'-terminal CCA, unstable tRNAs are marked with CCACCA and rapidly degraded. The chain is Multifunctional CCA protein from Tolumonas auensis (strain DSM 9187 / NBRC 110442 / TA 4).